The chain runs to 768 residues: Eukaryotic elongation factor 2 kinase (768 aa).

Positions 1–17 are enriched in polar residues; it reads MTIDTTNESDNSPTNSP. The tract at residues 1–21 is disordered; it reads MTIDTTNESDNSPTNSPGLEA. The 208-residue stretch at 102-309 folds into the Alpha-type protein kinase domain; the sequence is RYSAIRKQWT…ICETMDLSNF (208 aa). An ATP-binding site is contributed by 279 to 284; sequence GDGNLG. The span at 402 to 411 shows a compositional bias: acidic residues; it reads SEDEEDEEED. Residues 402–446 form a disordered region; it reads SEDEEDEEEDYPRSEKSGNSQKSRRSRMSISTRSSGDESASRPRK.

This sequence belongs to the protein kinase superfamily. Alpha-type protein kinase family. In terms of assembly, monomer or homodimer. Interacts with cmd-1 in the presence of Ca(2+).

It catalyses the reaction [translation elongation factor 2] + ATP = [translation elongation factor 2]-phosphate + ADP + H(+). Calcium(2+)/calmodulin dependent activity. Undergoes calcium/calmodulin-dependent intramolecular autophosphorylation, and this results in it becoming partially calcium/calmodulin-independent. Its function is as follows. Phosphorylates elongation factor-2 (eEF-2) at two threonine residues that are conserved in all eukaryotes and are located within a GTP-binding domain. Calcium(2+)/calmodulin dependent activity. Inactivates eEF-2 by catalyzing its phosphorylation. eEF-2 catalyzes the movement of the ribosome along mRNA during translation in eukaryotic cells. The protein is Eukaryotic elongation factor 2 kinase (efk-1) of Caenorhabditis elegans.